The following is an 895-amino-acid chain: Isoleucine--tRNA ligase (895 aa).

A 'HIGH' region motif is present at residues 57 to 67 (PYANGSIHVGH). Glu-549 serves as a coordination point for L-isoleucyl-5'-AMP. Residues 590 to 594 (KMSKS) carry the 'KMSKS' region motif. Lys-593 contributes to the ATP binding site. Zn(2+) is bound by residues Cys-869, Cys-872, Cys-888, and Cys-891.

Belongs to the class-I aminoacyl-tRNA synthetase family. IleS type 1 subfamily. In terms of assembly, monomer. Requires Zn(2+) as cofactor.

The protein localises to the cytoplasm. It carries out the reaction tRNA(Ile) + L-isoleucine + ATP = L-isoleucyl-tRNA(Ile) + AMP + diphosphate. Its function is as follows. Catalyzes the attachment of isoleucine to tRNA(Ile). As IleRS can inadvertently accommodate and process structurally similar amino acids such as valine, to avoid such errors it has two additional distinct tRNA(Ile)-dependent editing activities. One activity is designated as 'pretransfer' editing and involves the hydrolysis of activated Val-AMP. The other activity is designated 'posttransfer' editing and involves deacylation of mischarged Val-tRNA(Ile). The protein is Isoleucine--tRNA ligase of Mycoplasma genitalium (strain ATCC 33530 / DSM 19775 / NCTC 10195 / G37) (Mycoplasmoides genitalium).